The primary structure comprises 240 residues: Demethylmenaquinone methyltransferase (240 aa).

S-adenosyl-L-methionine contacts are provided by residues threonine 62, aspartate 80, 102-103 (DA), and serine 119.

Belongs to the class I-like SAM-binding methyltransferase superfamily. MenG/UbiE family.

It carries out the reaction a 2-demethylmenaquinol + S-adenosyl-L-methionine = a menaquinol + S-adenosyl-L-homocysteine + H(+). It functions in the pathway quinol/quinone metabolism; menaquinone biosynthesis; menaquinol from 1,4-dihydroxy-2-naphthoate: step 2/2. Functionally, methyltransferase required for the conversion of demethylmenaquinol (DMKH2) to menaquinol (MKH2). This Beutenbergia cavernae (strain ATCC BAA-8 / DSM 12333 / CCUG 43141 / JCM 11478 / NBRC 16432 / NCIMB 13614 / HKI 0122) protein is Demethylmenaquinone methyltransferase.